The chain runs to 470 residues: tRNA modification GTPase MnmE (470 aa).

3 residues coordinate (6S)-5-formyl-5,6,7,8-tetrahydrofolate: Lys-27, Glu-90, and Arg-129. A TrmE-type G domain is found at 231–391; it reads GVSLVLAGKP…LRDFLNQRFL (161 aa). Residues 241–246, 260–266, and 285–288 each bind GTP; these read NVGKSS, TPFPGTT, and DTAG. The Mg(2+) site is built by Ser-245 and Thr-266. Lys-470 is a (6S)-5-formyl-5,6,7,8-tetrahydrofolate binding site.

It belongs to the TRAFAC class TrmE-Era-EngA-EngB-Septin-like GTPase superfamily. TrmE GTPase family. Homodimer. Heterotetramer of two MnmE and two MnmG subunits. It depends on K(+) as a cofactor.

It is found in the cytoplasm. Its function is as follows. Exhibits a very high intrinsic GTPase hydrolysis rate. Involved in the addition of a carboxymethylaminomethyl (cmnm) group at the wobble position (U34) of certain tRNAs, forming tRNA-cmnm(5)s(2)U34. This chain is tRNA modification GTPase MnmE, found in Syntrophobacter fumaroxidans (strain DSM 10017 / MPOB).